The chain runs to 491 residues: Ketol-acid reductoisomerase (NADP(+)) (491 aa).

The KARI N-terminal Rossmann domain occupies 15–208 (AQLGKCRFMG…GGHRAGVLES (194 aa)). NADP(+) contacts are provided by residues 45 to 48 (CGAQ), Arg68, Arg76, Ser78, and 108 to 110 (DKQ). His132 is a catalytic residue. Gly158 is an NADP(+) binding site. KARI C-terminal knotted domains are found at residues 209-344 (SFVA…TAPQ) and 345-484 (YEGK…MTDM). Residues Asp217, Glu221, Glu389, and Glu393 each coordinate Mg(2+). Ser414 contributes to the substrate binding site.

This sequence belongs to the ketol-acid reductoisomerase family. Requires Mg(2+) as cofactor.

The enzyme catalyses (2R)-2,3-dihydroxy-3-methylbutanoate + NADP(+) = (2S)-2-acetolactate + NADPH + H(+). It carries out the reaction (2R,3R)-2,3-dihydroxy-3-methylpentanoate + NADP(+) = (S)-2-ethyl-2-hydroxy-3-oxobutanoate + NADPH + H(+). It participates in amino-acid biosynthesis; L-isoleucine biosynthesis; L-isoleucine from 2-oxobutanoate: step 2/4. It functions in the pathway amino-acid biosynthesis; L-valine biosynthesis; L-valine from pyruvate: step 2/4. Its function is as follows. Involved in the biosynthesis of branched-chain amino acids (BCAA). Catalyzes an alkyl-migration followed by a ketol-acid reduction of (S)-2-acetolactate (S2AL) to yield (R)-2,3-dihydroxy-isovalerate. In the isomerase reaction, S2AL is rearranged via a Mg-dependent methyl migration to produce 3-hydroxy-3-methyl-2-ketobutyrate (HMKB). In the reductase reaction, this 2-ketoacid undergoes a metal-dependent reduction by NADPH to yield (R)-2,3-dihydroxy-isovalerate. The polypeptide is Ketol-acid reductoisomerase (NADP(+)) (Klebsiella pneumoniae (strain 342)).